Reading from the N-terminus, the 93-residue chain is Putative regulatory protein Amet_2791 (93 aa).

The protein belongs to the RemA family.

The sequence is that of Putative regulatory protein Amet_2791 from Alkaliphilus metalliredigens (strain QYMF).